The primary structure comprises 541 residues: Chaperonin GroEL 1 (541 aa).

ATP contacts are provided by residues 29–32 (TLGP), 86–90 (DGTTT), Gly413, 478–480 (NAA), and Asp494. The disordered stretch occupies residues 520-541 (VVEKPAEAEDDGHGHGHGHHHH). Over residues 523–533 (KPAEAEDDGHG) the composition is skewed to basic and acidic residues.

It belongs to the chaperonin (HSP60) family. Forms a cylinder of 14 subunits composed of two heptameric rings stacked back-to-back. Interacts with the co-chaperonin GroES.

The protein localises to the cytoplasm. The enzyme catalyses ATP + H2O + a folded polypeptide = ADP + phosphate + an unfolded polypeptide.. In terms of biological role, together with its co-chaperonin GroES, plays an essential role in assisting protein folding. The GroEL-GroES system forms a nano-cage that allows encapsulation of the non-native substrate proteins and provides a physical environment optimized to promote and accelerate protein folding. The chain is Chaperonin GroEL 1 from Mycolicibacterium gilvum (strain PYR-GCK) (Mycobacterium gilvum (strain PYR-GCK)).